A 29-amino-acid chain; its full sequence is U1-pseudomyrmecitoxin-Pt1 subunit SS2 (29 aa).

Belongs to the myrmexin family. In terms of assembly, heterodimer composed of subunit SS2 and subunit LS1 (U1-PSDTX-Pt1e), and heterodimer composed of subunit SS2 and LS2 (U1-PSDTX-Pt1c); disulfide-linked. In terms of tissue distribution, expressed by the venom gland.

The protein localises to the secreted. Functionally, this heterodimer may have anti-inflammatory properties, since the myrmexin complex (composed of 6 SS-LS heterodimers) inhibits carrageenin-induced edema in a dose-dependent manner (after subcutaneous injection into rats). In Pseudomyrmex triplarinus (Ant), this protein is U1-pseudomyrmecitoxin-Pt1 subunit SS2.